Reading from the N-terminus, the 311-residue chain is ATP synthase subunit a (311 aa).

A run of 6 helical transmembrane segments spans residues 62-82 (AVHV…GFIF), 123-143 (IAPM…MDLI), 170-190 (DPNA…MFSI), 213-233 (LWYL…VALI), 253-273 (IFIL…VGGV), and 276-296 (WAWA…FMVL).

The protein belongs to the ATPase A chain family. F-type ATPases have 2 components, CF(1) - the catalytic core - and CF(0) - the membrane proton channel. CF(1) has five subunits: alpha(3), beta(3), gamma(1), delta(1), epsilon(1). CF(0) has three main subunits: a(1), b(2) and c(9-12). The alpha and beta chains form an alternating ring which encloses part of the gamma chain. CF(1) is attached to CF(0) by a central stalk formed by the gamma and epsilon chains, while a peripheral stalk is formed by the delta and b chains.

The protein resides in the cell inner membrane. In terms of biological role, key component of the proton channel; it plays a direct role in the translocation of protons across the membrane. The protein is ATP synthase subunit a of Saccharophagus degradans (strain 2-40 / ATCC 43961 / DSM 17024).